The chain runs to 831 residues: MECIERLRRKRTEYLFKNFIMIKFSFFNYRINMRNFHATSLRFIKFNYSAIKNIRNFSTEKKSEPKLSLFLTNISKILSEHKKDLYKAQEIIETEWLKLATPSIDVKSDIKSTMYAKQRLIHGRAFDLLKLYKSNGNLNKISKSLKDYIVNEKFIFIAWSYLLASYSKSSLPNLDYRIGYSITRHIYRESYKNDFMSFEDFPEYNKFDLGFFVKLGDIFINTFTSPLNPIFERVFENEIYSLKINKEYEYEIMESLVISPKALPMVCPPLIWWHGIRGGSVINLNDNADDSLVVGSFHHSHKIAISDKLYSVINKLNAFKFKINADLLSYLQNEGSFIIDFYKKTKKDTYINNMITLDIAKTYLNTPFYLNVNIDWRGRIYTQSFYLGYQGSELSLALINLFEGQKLDEEGLFFFYVYGANIYNEGGKFSKKSFQDRFNWVVENLDNIIAMDKDFILKAESPTLFAAFCLTMRKLKENPDHPVFNPIFLDATCSGVQHFAAMLLDLELGKYVNLINSGESVNDFYSQLIPAINKAINESAEKKLKNVKFSDISLNRSLLKKVIMTKSYNVTTYGITEQLKSKLEKVEKIIISKGKEIKVYDYLVPTKNGKFVVLDTFEVETLASIINDNIFNQFPKLHSIYEYLTRLTKIYLKLDIPISCSTPDGLELTQRYNLSKVQKLTINFLGKNRTAVLRSWVSDKDSRREVPAIIPNIIHSLDAAHLPMLIDSWDSYILPIHDCFGTHPNDMFKLAEQVRECFILLYSKNDFLSKIDSKFRENLKDYKIEIVNKNGEDFVKIKGTPRYDYLPLPVLPQMGELNVEDIRDMGKYMIS.

Catalysis depends on residues Asp490, Lys560, and Asp738.

It belongs to the phage and mitochondrial RNA polymerase family.

The protein resides in the mitochondrion. The enzyme catalyses RNA(n) + a ribonucleoside 5'-triphosphate = RNA(n+1) + diphosphate. Functionally, DNA-dependent RNA polymerase catalyzes the transcription of DNA into RNA using the four ribonucleoside triphosphates as substrates. The protein is Probable DNA-directed RNA polymerase of Gelasinospora sp. (strain G114).